The primary structure comprises 276 residues: NADPH-dependent 7-cyano-7-deazaguanine reductase (276 aa).

83–85 contacts substrate; the sequence is IES. 85–86 contacts NADPH; it reads SK. Cysteine 184 (thioimide intermediate) is an active-site residue. The Proton donor role is filled by aspartate 191. 223-224 is a binding site for substrate; sequence HE. 252–253 serves as a coordination point for NADPH; the sequence is RG.

It belongs to the GTP cyclohydrolase I family. QueF type 2 subfamily. As to quaternary structure, homodimer.

The protein resides in the cytoplasm. It carries out the reaction 7-aminomethyl-7-carbaguanine + 2 NADP(+) = 7-cyano-7-deazaguanine + 2 NADPH + 3 H(+). It participates in tRNA modification; tRNA-queuosine biosynthesis. Its function is as follows. Catalyzes the NADPH-dependent reduction of 7-cyano-7-deazaguanine (preQ0) to 7-aminomethyl-7-deazaguanine (preQ1). The sequence is that of NADPH-dependent 7-cyano-7-deazaguanine reductase from Pseudomonas entomophila (strain L48).